The chain runs to 122 residues: Large ribosomal subunit protein uL14 (122 aa).

The protein belongs to the universal ribosomal protein uL14 family. In terms of assembly, part of the 50S ribosomal subunit. Forms a cluster with proteins L3 and L19. In the 70S ribosome, L14 and L19 interact and together make contacts with the 16S rRNA in bridges B5 and B8. Can interact with ribosomal silencing factor RsfS, which may inhibit ribosomal subunit association.

Its function is as follows. Binds to 23S rRNA. Forms part of two intersubunit bridges in the 70S ribosome. This Synechocystis sp. (strain ATCC 27184 / PCC 6803 / Kazusa) protein is Large ribosomal subunit protein uL14.